The following is a 358-amino-acid chain: MREYKIAAIPADGIGPEVIAAGLQVLEALEQRSGDFKIHTETFDWGSDYYKKHGVMMPADGLDKLKKFDAIFFGAVGAPDVPDHITLWGLRLPICQGFDQYANVRPTKILPGITPPLRNCGPGDLDWVIVRENSEGEYSGHGGRAHRGLPEEVGTEVAIFTRVGVTRIMRYAFKLAQARPRKLLTVVTKSNAQRHGMVMWDEIAAEVATEFPDVTWDKMLVDAMTVRMTLKPETLDTIVATNLHADILSDLAGALAGSLGVAPTANIDPERRFPSMFEPIHGSAFDITGKGIANPIATFWTAAQMLEHLGERDAAARLMGAVERVTEAGILTPDVGGTANTSQVTEAVCNAIAGSNII.

Mn(2+)-binding residues include Asp-222, Asp-246, and Asp-250.

This sequence belongs to the isocitrate and isopropylmalate dehydrogenases family. It depends on Mg(2+) as a cofactor. The cofactor is Mn(2+). K(+) is required as a cofactor.

The protein localises to the cytoplasm. It catalyses the reaction tartrate + NAD(+) = 2-hydroxy-3-oxosuccinate + NADH + H(+). The catalysed reaction is (2R,3S)-tartrate + NAD(+) = 2-hydroxy-3-oxosuccinate + NADH + H(+). It carries out the reaction (2R,3R)-tartrate + NAD(+) = 2-hydroxy-3-oxosuccinate + NADH + H(+). The enzyme catalyses (2R,3R)-tartrate + H(+) = (R)-glycerate + CO2. It catalyses the reaction (R)-malate + NAD(+) = pyruvate + CO2 + NADH. Its pathway is carbohydrate acid metabolism; tartrate degradation; 2-hydroxy-3-oxosuccinate from L-tartrate: step 1/1. It participates in carbohydrate acid metabolism; tartrate degradation; 2-hydroxy-3-oxosuccinate from meso-tartrate: step 1/1. It functions in the pathway carbohydrate acid metabolism; tartrate degradation; D-glycerate from L-tartrate: step 1/1. Functionally, has multiple catalytic activities. Apart from catalyzing the oxidation of (+)-tartrate to oxaloglycolate, also converts meso-tartrate to D-glycerate and catalyzes the oxidative decarboxylation of D-malate to pyruvate. The sequence is that of Probable tartrate dehydrogenase/decarboxylase TtuC' (ttuC') from Agrobacterium vitis (Rhizobium vitis).